Reading from the N-terminus, the 81-residue chain is Protein Vpu (81 aa).

Over 1-7 (MQPLQIL) the chain is Extracellular. A helical transmembrane segment spans residues 8–28 (SIVALVVAAIIAIVVWSIVFI). Topologically, residues 29-81 (LIRKILRQRKIDRLIDRIRERAEDSGNESEGIRKELSALVEMGHDAPGDIDDL) are cytoplasmic. A phosphoserine; by host CK2 mark is found at Ser53 and Ser57.

This sequence belongs to the HIV-1 VPU protein family. As to quaternary structure, homopentamer. Interacts with host CD4 and BRTC; these interactions induce proteasomal degradation of CD4. Interacts with host BST2; this interaction leads to the degradation of host BST2. Interacts with host FBXW11. Interacts with host AP1M1; this interaction plays a role in the mistrafficking and subsequent degradation of host BST2. Interacts with host RANBP2; this interaction allows Vpu to down-regulate host BLM sumoylation. Post-translationally, phosphorylated by host CK2. This phosphorylation is necessary for interaction with human BTRC and degradation of CD4.

The protein localises to the host membrane. Its activity is regulated as follows. Ion channel activity is inhibited by hexamethylene amiloride in vitro. Functionally, enhances virion budding by targeting host CD4 and Tetherin/BST2 to proteasome degradation. Degradation of CD4 prevents any unwanted premature interactions between viral Env and its host receptor CD4 in the endoplasmic reticulum. Degradation of antiretroviral protein Tetherin/BST2 is important for virion budding, as BST2 tethers new viral particles to the host cell membrane. Mechanistically, Vpu bridges either CD4 or BST2 to BTRC, a substrate recognition subunit of the Skp1/Cullin/F-box protein E3 ubiquitin ligase, induces their ubiquitination and subsequent proteasomal degradation. The alteration of the E3 ligase specificity by Vpu seems to promote the degradation of host IKBKB, leading to NF-kappa-B down-regulation and subsequent apoptosis. Acts as a viroporin that forms an oligomeric ion channel in membranes. Modulates the host DNA repair mechanisms to promote degradation of nuclear viral cDNA in cells that are already productively infected in order to suppress immune sensing and proviral hyper-integration (superinfection). Manipulates PML-NBs and modulates SUMOylation of host BLM protein thereby enhancing its DNA-end processing activity toward viral unintegrated linear DNA. Also inhibits RAD52-mediated homologous repair of viral cDNA, preventing the generation of dead-end circular forms of single copies of the long terminal repeat and permitting sustained nucleolytic attack. This chain is Protein Vpu, found in Homo sapiens (Human).